The primary structure comprises 504 residues: MLRASSKRLQLSWQVFRRFQSSNPQLSFPCVDQAQERSRQFEQSLQKQQACPNSVDPSASITSPSLSSGPEPVYGKIVSGFKKFYHNKPFLCDHGGILPKFEIAYETWGTLNKDHSNAILLHTGLSASSHAHSHPENTAPGWWEQFIGPGKDVDTNKFFVICTNVLGSCYGSTGPSSVDPGDGKHYATRFPIITVNDMIRAQLLLLDHLKIEKLYASVGSSLGGMQSLTLGALAPHRVGRIASISGGARSHPYSIALRFTQRQILMNDPYWNRGFYYDGVPPHTGMKLAREVATISYRSGPEWEQRFGNRRADPSVSPAFCPDFLIETYLDHAGEKFCLQYDPNSLLYISKAMDMHDMSASHQRSLSENRKKNQHKLDKYLSADVSAEEIIKLNEDTSVLPDVPYQEIANEDRAPEPDPETNLIAGLAPLKDTPVMVMGVESDNLMPVECQRETARCLEKAGNKQVVYHELDANESFYGHDTFLIYRKDLDLVGGKLKKFLELS.

The N-terminal 26 residues, 1-26 (MLRASSKRLQLSWQVFRRFQSSNPQL), are a transit peptide targeting the mitochondrion. The interval 49–70 (QACPNSVDPSASITSPSLSSGP) is disordered. Positions 57-70 (PSASITSPSLSSGP) are enriched in low complexity. Positions 117–395 (NAILLHTGLS…SAEEIIKLNE (279 aa)) constitute an AB hydrolase-1 domain. Residues 124-127 (GLSA) form an important for substrate specificity region. The active-site Nucleophile is the serine 221. Arginine 290 serves as a coordination point for substrate. Catalysis depends on residues aspartate 443 and histidine 480. Aspartate 481 serves as a coordination point for substrate.

The protein belongs to the AB hydrolase superfamily. MetX family.

The protein resides in the mitochondrion. It carries out the reaction succinyl-CoA + L-serine = O-succinyl-L-serine + CoA. It functions in the pathway amino-acid biosynthesis; L-cysteine biosynthesis; L-cysteine from L-serine: step 1/2. In terms of biological role, transfers a succinyl group from succinyl-CoA to L-serine, forming succinyl-L-serine. Also has weak serine acetyl transferase activity and homoserine succinyl transferase activity. The chain is Serine O-succinyltransferase from Schizosaccharomyces pombe (strain 972 / ATCC 24843) (Fission yeast).